The chain runs to 547 residues: Chaperonin GroEL (547 aa).

ATP contacts are provided by residues 30 to 33 (TLGP), lysine 51, 87 to 91 (DGTTT), glycine 415, 479 to 481 (NAA), and aspartate 495.

Belongs to the chaperonin (HSP60) family. Forms a cylinder of 14 subunits composed of two heptameric rings stacked back-to-back. Interacts with the co-chaperonin GroES.

It localises to the cytoplasm. The catalysed reaction is ATP + H2O + a folded polypeptide = ADP + phosphate + an unfolded polypeptide.. Together with its co-chaperonin GroES, plays an essential role in assisting protein folding. The GroEL-GroES system forms a nano-cage that allows encapsulation of the non-native substrate proteins and provides a physical environment optimized to promote and accelerate protein folding. This is Chaperonin GroEL from Pseudomonas syringae pv. syringae (strain B728a).